Reading from the N-terminus, the 289-residue chain is CRISPR system Cms protein Csm4 (289 aa).

It belongs to the CRISPR-associated Csm4 family. As to quaternary structure, probably part of the Csm effector complex, that includes Cas10, Csm2, Csm3, Csm4, Csm5 and mature crRNA. Interacts with Cas10 (csm1).

Its function is as follows. CRISPR (clustered regularly interspaced short palindromic repeat) is an adaptive immune system that provides protection against mobile genetic elements (viruses, transposable elements and conjugative plasmids). CRISPR clusters contain spacers, sequences complementary to antecedent mobile elements, and target invading nucleic acids. CRISPR clusters are transcribed and processed into CRISPR RNA (crRNA). The type III-A Csm effector complex binds crRNA and acts as a crRNA-guided RNase, DNase and cyclic oligoadenylate synthase; binding of target RNA cognate to the crRNA is required for all activities. The subunit probably binds to the 5' handle of the crRNA, helping in discrimination between self- and non-self. The chain is CRISPR system Cms protein Csm4 from Thermococcus onnurineus (strain NA1).